The primary structure comprises 276 residues: MLLRFTKMHGLGNDFMVLDLVSQHAHVQPKHVKLWGDRNTGVGFDQLLIVEAPSSPDVDFRYRIFNADGSEVEQCGNGARCFARFVQDKRLTVKKSIRVETKGGIIELNIRPDGQVTVDMGPPRLAPAEIPFQAEREALSYEIEVNGQRVELAAVSMGNPHGVLRVENVDSAPVHSLGPQLEVHPRFPKKANIGFLQVLDPHHARLRVWERGVGETQACGTGACAAAVAGIRQGWLQSPVQIDLPGGRLHIEWAGPGQPVMMTGPAVRVYEGQVRL.

Residues N13, Q46, and N66 each coordinate substrate. Residue C75 is the Proton donor of the active site. Substrate is bound by residues 76–77 (GN), N159, N192, and 210–211 (ER). Residue C219 is the Proton acceptor of the active site. 220–221 (GT) lines the substrate pocket.

The protein belongs to the diaminopimelate epimerase family. As to quaternary structure, homodimer.

It localises to the cytoplasm. It carries out the reaction (2S,6S)-2,6-diaminopimelate = meso-2,6-diaminopimelate. The protein operates within amino-acid biosynthesis; L-lysine biosynthesis via DAP pathway; DL-2,6-diaminopimelate from LL-2,6-diaminopimelate: step 1/1. Functionally, catalyzes the stereoinversion of LL-2,6-diaminopimelate (L,L-DAP) to meso-diaminopimelate (meso-DAP), a precursor of L-lysine and an essential component of the bacterial peptidoglycan. In Pseudomonas aeruginosa (strain UCBPP-PA14), this protein is Diaminopimelate epimerase.